The following is a 124-amino-acid chain: UPF0102 protein tll1737 (124 aa).

The protein belongs to the UPF0102 family.

The polypeptide is UPF0102 protein tll1737 (Thermosynechococcus vestitus (strain NIES-2133 / IAM M-273 / BP-1)).